The primary structure comprises 204 residues: dITP/XTP pyrophosphatase (204 aa).

Substrate is bound at residue 11-16; sequence SRNRKK. Asp-76 functions as the Proton acceptor in the catalytic mechanism. Asp-76 provides a ligand contact to Mg(2+). Substrate contacts are provided by residues Ser-77, 158 to 161, Lys-181, and 186 to 187; these read FGYD and HR.

Belongs to the HAM1 NTPase family. In terms of assembly, homodimer. Requires Mg(2+) as cofactor.

It carries out the reaction XTP + H2O = XMP + diphosphate + H(+). The enzyme catalyses dITP + H2O = dIMP + diphosphate + H(+). It catalyses the reaction ITP + H2O = IMP + diphosphate + H(+). Its function is as follows. Pyrophosphatase that catalyzes the hydrolysis of nucleoside triphosphates to their monophosphate derivatives, with a high preference for the non-canonical purine nucleotides XTP (xanthosine triphosphate), dITP (deoxyinosine triphosphate) and ITP. Seems to function as a house-cleaning enzyme that removes non-canonical purine nucleotides from the nucleotide pool, thus preventing their incorporation into DNA/RNA and avoiding chromosomal lesions. In Mycobacterium tuberculosis (strain CDC 1551 / Oshkosh), this protein is dITP/XTP pyrophosphatase.